A 712-amino-acid chain; its full sequence is Polyribonucleotide nucleotidyltransferase (712 aa).

D487 and D493 together coordinate Mg(2+). The KH domain occupies 554-613 (PKIITMTINPDKIRDVIGPSGKQINKIIEETGVKIDIEQDGTVFISSINQEMNDKAKKII). An S1 motif domain is found at 623 to 691 (GEIYEGKVKR…KQGRVNLSRK (69 aa)).

This sequence belongs to the polyribonucleotide nucleotidyltransferase family. Requires Mg(2+) as cofactor.

The protein localises to the cytoplasm. It carries out the reaction RNA(n+1) + phosphate = RNA(n) + a ribonucleoside 5'-diphosphate. Its function is as follows. Involved in mRNA degradation. Catalyzes the phosphorolysis of single-stranded polyribonucleotides processively in the 3'- to 5'-direction. The protein is Polyribonucleotide nucleotidyltransferase of Bacillus anthracis (strain CDC 684 / NRRL 3495).